We begin with the raw amino-acid sequence, 128 residues long: uncharacterized protein (128 aa).

This is an uncharacterized protein from Vaccinia virus (strain Copenhagen) (VACV).